We begin with the raw amino-acid sequence, 236 residues long: MDSFLRLLIHGASGRMGQSLLRLASEDPSFQVTAAVVGNAPHRHVSDGVPFFAAAELAAVPAFDVAIDFSLPQGFSSLLALCVARAVPLVSGTTGLDSRQHEALVMAGARIPLVWGSNFSVGMAVLVNLVERAGDALSGWDCDIVESHHVHKQDAPSGSALTLGEAVACKGIAPRYTSLRAGDIIGDHLVQFTGLGERIELVHRASNRDVFARGALSVARRVVGRVPGCYRVRDLM.

Residues 11 to 16 (GASGRM), 92 to 94 (GTT), and 116 to 119 (GSNF) each bind NAD(+). His148 serves as the catalytic Proton donor/acceptor. His149 is a binding site for (S)-2,3,4,5-tetrahydrodipicolinate. Lys152 (proton donor) is an active-site residue. Residue 158–159 (GS) coordinates (S)-2,3,4,5-tetrahydrodipicolinate.

This sequence belongs to the DapB family.

It is found in the cytoplasm. It catalyses the reaction (S)-2,3,4,5-tetrahydrodipicolinate + NAD(+) + H2O = (2S,4S)-4-hydroxy-2,3,4,5-tetrahydrodipicolinate + NADH + H(+). The catalysed reaction is (S)-2,3,4,5-tetrahydrodipicolinate + NADP(+) + H2O = (2S,4S)-4-hydroxy-2,3,4,5-tetrahydrodipicolinate + NADPH + H(+). It functions in the pathway amino-acid biosynthesis; L-lysine biosynthesis via DAP pathway; (S)-tetrahydrodipicolinate from L-aspartate: step 4/4. In terms of biological role, catalyzes the conversion of 4-hydroxy-tetrahydrodipicolinate (HTPA) to tetrahydrodipicolinate. This Xylella fastidiosa (strain M23) protein is 4-hydroxy-tetrahydrodipicolinate reductase.